We begin with the raw amino-acid sequence, 214 residues long: Exosome complex component RRP46 homolog (214 aa).

It belongs to the RNase PH family. Homodimer. Component of the RNA exosome complex. Interacts with crn-4; interaction promotes the DNase activity of crn-4. Interacts with crn-3, cps-6 and cyn-13.

Its subcellular location is the cytoplasm. It localises to the nucleus. Its function is as follows. Non-catalytic component of the RNA exosome complex which has 3'-&gt;5' exoribonuclease activity and participates in a multitude of cellular RNA processing and degradation events. Involved in apoptotic DNA degradation. In vitro, does not bind or digest single-stranded RNA. In vitro, binds to double-stranded DNA without detectable DNase activity. This chain is Exosome complex component RRP46 homolog, found in Caenorhabditis elegans.